The chain runs to 128 residues: Large ribosomal subunit protein bL20c (128 aa).

It belongs to the bacterial ribosomal protein bL20 family.

It localises to the plastid. The protein localises to the chloroplast. Binds directly to 23S ribosomal RNA and is necessary for the in vitro assembly process of the 50S ribosomal subunit. It is not involved in the protein synthesizing functions of that subunit. This Gossypium barbadense (Sea Island cotton) protein is Large ribosomal subunit protein bL20c.